A 139-amino-acid polypeptide reads, in one-letter code: uncharacterized protein (139 aa).

It to S.typhimurium FliF.

In terms of biological role, may be involved in the assembly, structure, or function of the flagellum. May polymerize to form a filamentous structure that is part of the flagellum. This is an uncharacterized protein from Bacillus subtilis (strain 168).